A 420-amino-acid chain; its full sequence is Transcription activator GLK1 (420 aa).

The tract at residues 74–152 (GDFSNHMNAS…NRISNNEGKR (79 aa)) is disordered. Residues 106–117 (KGEEVVSKRDDV) are compositionally biased toward basic and acidic residues. Residues 135–147 (SSSASSKNNRISN) show a composition bias toward low complexity. A DNA-binding region (myb-like GARP) is located at residues 150–209 (GKRKVKVDWTPELHRRFVEAVEQLGVDKAVPSRILELMGVHCLTRHNVASHLQKYRSHRK).

As to quaternary structure, interacts with NAC92. Expressed in rosette and cauline leaves. Expressed at low levels in cotyledons and shoots.

The protein resides in the nucleus. Functionally, transcriptional activator that functions with GLK2 to promote chloroplast development. Acts as an activator of nuclear photosynthetic genes involved in chlorophyll biosynthesis, light harvesting, and electron transport. Acts in a cell-autonomous manner to coordinate and maintain the photosynthetic apparatus within individual cells. May function in photosynthetic capacity optimization by integrating responses to variable environmental and endogenous cues. Prevents premature senescence. The protein is Transcription activator GLK1 (GLK1) of Arabidopsis thaliana (Mouse-ear cress).